We begin with the raw amino-acid sequence, 311 residues long: HPr kinase/phosphorylase (311 aa).

Residues His139 and Lys160 contribute to the active site. 154-161 serves as a coordination point for ATP; the sequence is GASGVGKS. Ser161 is a Mg(2+) binding site. Residue Asp178 is the Proton acceptor; for phosphorylation activity. Proton donor; for dephosphorylation activity of the active site. Positions 202 to 211 are important for the catalytic mechanism of both phosphorylation and dephosphorylation; it reads LEIRGIGIID. A Mg(2+)-binding site is contributed by Glu203. Arg244 is a catalytic residue. Residues 265–270 form an important for the catalytic mechanism of dephosphorylation region; the sequence is PVRPGR.

Belongs to the HPrK/P family. As to quaternary structure, homohexamer. Mg(2+) is required as a cofactor.

It catalyses the reaction [HPr protein]-L-serine + ATP = [HPr protein]-O-phospho-L-serine + ADP + H(+). It carries out the reaction [HPr protein]-O-phospho-L-serine + phosphate + H(+) = [HPr protein]-L-serine + diphosphate. Functionally, catalyzes the ATP- as well as the pyrophosphate-dependent phosphorylation of a specific serine residue in HPr, a phosphocarrier protein of the phosphoenolpyruvate-dependent sugar phosphotransferase system (PTS). HprK/P also catalyzes the pyrophosphate-producing, inorganic phosphate-dependent dephosphorylation (phosphorolysis) of seryl-phosphorylated HPr (P-Ser-HPr). The two antagonistic activities of HprK/P are regulated by several intracellular metabolites, which change their concentration in response to the absence or presence of rapidly metabolisable carbon sources (glucose, fructose, etc.) in the growth medium. Therefore, by controlling the phosphorylation state of HPr, HPrK/P is a sensor enzyme that plays a major role in the regulation of carbon metabolism and sugar transport: it mediates carbon catabolite repression (CCR), and regulates PTS-catalyzed carbohydrate uptake and inducer exclusion. The chain is HPr kinase/phosphorylase from Exiguobacterium sibiricum (strain DSM 17290 / CCUG 55495 / CIP 109462 / JCM 13490 / 255-15).